Here is a 502-residue protein sequence, read N- to C-terminus: Alpha-ketoglutarate-dependent dioxygenase FTO (502 aa).

The fe2OG dioxygenase domain stretch occupies residues 32-324 (TPKDDEFYQQ…SSTHRVAECS (293 aa)). Residues arginine 96 and tyrosine 108 each contribute to the substrate site. Asparagine 202 is a 2-oxoglutarate binding site. The interval 210 to 221 (PYLKEEPYFGMG) is loop L1; predicted to block binding of double-stranded DNA or RNA. Lysine 213 is modified (N6-acetyllysine). Residues histidine 228 and aspartate 230 each contribute to the Fe cation site. Position 228-231 (228-231 (HHDE)) interacts with substrate. Position 292 (tyrosine 292) interacts with 2-oxoglutarate. Histidine 304 lines the Fe cation pocket. 2-oxoglutarate-binding positions include 313 to 315 (RFS), threonine 317, and arginine 319.

It belongs to the fto family. In terms of assembly, monomer. May also exist as homodimer. It depends on Fe(2+) as a cofactor. In terms of tissue distribution, ubiquitous. Highly expressed in teeth and weakly in bone.

It is found in the nucleus. Its subcellular location is the nucleus speckle. It localises to the cytoplasm. It catalyses the reaction a 5'-end (N(7)-methyl 5'-triphosphoguanosine)-(N(6),2'-O-dimethyladenosine) in mRNA + 2-oxoglutarate + O2 = a 5'-end (N(7)-methyl 5'-triphosphoguanosine)-(2'-O-methyladenosine) in mRNA + formaldehyde + succinate + CO2. It carries out the reaction an N(6)-methyladenosine in mRNA + 2-oxoglutarate + O2 = an adenosine in mRNA + formaldehyde + succinate + CO2. The enzyme catalyses N(6)-methyladenosine in U6 snRNA + 2-oxoglutarate + O2 = adenosine in U6 snRNA + formaldehyde + succinate + CO2. The catalysed reaction is a 5'-end (N(7)-methyl 5'-triphosphoguanosine)-(N(6),2'-O-dimethyladenosine) in U6 snRNA + 2-oxoglutarate + O2 = a 5'-end (N(7)-methyl 5'-triphosphoguanosine)-(2'-O-methyladenosine) in U6 snRNA + formaldehyde + succinate + CO2. It catalyses the reaction an N(1)-methyladenosine in tRNA + 2-oxoglutarate + O2 = an adenosine in tRNA + formaldehyde + succinate + CO2. Activated by ascorbate. Inhibited by N-oxalylglycine, fumarate and succinate. In terms of biological role, RNA demethylase that mediates oxidative demethylation of different RNA species, such as mRNAs, tRNAs and snRNAs, and acts as a regulator of fat mass, adipogenesis and energy homeostasis. Specifically demethylates N(6)-methyladenosine (m6A) RNA, the most prevalent internal modification of messenger RNA (mRNA) in higher eukaryotes. M6A demethylation by FTO affects mRNA expression and stability. Also able to demethylate m6A in U6 small nuclear RNA (snRNA). Mediates demethylation of N(6),2'-O-dimethyladenosine cap (m6A(m)), by demethylating the N(6)-methyladenosine at the second transcribed position of mRNAs and U6 snRNA. Demethylation of m6A(m) in the 5'-cap by FTO affects mRNA stability by promoting susceptibility to decapping. Also acts as a tRNA demethylase by removing N(1)-methyladenine from various tRNAs. Has no activity towards 1-methylguanine. Has no detectable activity towards double-stranded DNA. Also able to repair alkylated DNA and RNA by oxidative demethylation: demethylates single-stranded RNA containing 3-methyluracil, single-stranded DNA containing 3-methylthymine and has low demethylase activity towards single-stranded DNA containing 1-methyladenine or 3-methylcytosine. Ability to repair alkylated DNA and RNA is however unsure in vivo. Involved in the regulation of fat mass, adipogenesis and body weight, thereby contributing to the regulation of body size and body fat accumulation. Involved in the regulation of thermogenesis and the control of adipocyte differentiation into brown or white fat cells. Regulates activity of the dopaminergic midbrain circuitry via its ability to demethylate m6A in mRNAs. The protein is Alpha-ketoglutarate-dependent dioxygenase FTO of Rattus norvegicus (Rat).